Consider the following 434-residue polypeptide: Histidinol dehydrogenase (434 aa).

Positions 130, 188, and 211 each coordinate NAD(+). Residues Ser237, Gln259, and His262 each contribute to the substrate site. Gln259 and His262 together coordinate Zn(2+). Catalysis depends on proton acceptor residues Glu326 and His327. Residues His327, Asp360, Glu414, and His419 each contribute to the substrate site. Residue Asp360 coordinates Zn(2+). Zn(2+) is bound at residue His419.

This sequence belongs to the histidinol dehydrogenase family. In terms of assembly, homodimer. It depends on Zn(2+) as a cofactor.

The catalysed reaction is L-histidinol + 2 NAD(+) + H2O = L-histidine + 2 NADH + 3 H(+). Its pathway is amino-acid biosynthesis; L-histidine biosynthesis; L-histidine from 5-phospho-alpha-D-ribose 1-diphosphate: step 9/9. Its function is as follows. Catalyzes the sequential NAD-dependent oxidations of L-histidinol to L-histidinaldehyde and then to L-histidine. This Salmonella paratyphi A (strain ATCC 9150 / SARB42) protein is Histidinol dehydrogenase.